A 454-amino-acid polypeptide reads, in one-letter code: tRNA modification GTPase MnmE (454 aa).

Residues R23, E80, and K120 each coordinate (6S)-5-formyl-5,6,7,8-tetrahydrofolate. In terms of domain architecture, TrmE-type G spans 216–377; that stretch reads GMKVVIAGRP…LRDHLKQSMG (162 aa). Residue N226 coordinates K(+). GTP contacts are provided by residues 226–231, 245–251, 270–273, 335–338, and 358–360; these read NAGKSS, TDIAGTT, DTAG, NKAD, and SAR. A Mg(2+)-binding site is contributed by S230. Residues T245, I247, and T250 each contribute to the K(+) site. Residue T251 coordinates Mg(2+). K454 serves as a coordination point for (6S)-5-formyl-5,6,7,8-tetrahydrofolate.

Belongs to the TRAFAC class TrmE-Era-EngA-EngB-Septin-like GTPase superfamily. TrmE GTPase family. As to quaternary structure, homodimer. Heterotetramer of two MnmE and two MnmG subunits. It depends on K(+) as a cofactor.

It is found in the cytoplasm. Functionally, exhibits a very high intrinsic GTPase hydrolysis rate. Involved in the addition of a carboxymethylaminomethyl (cmnm) group at the wobble position (U34) of certain tRNAs, forming tRNA-cmnm(5)s(2)U34. The polypeptide is tRNA modification GTPase MnmE (Yersinia pseudotuberculosis serotype O:1b (strain IP 31758)).